A 140-amino-acid polypeptide reads, in one-letter code: RxLR effector protein CRE2 (140 aa).

A signal peptide spans 1 to 24; sequence MRWLIWTAVSTLVMLLAMTEVSAS. A RxLR-dEER motif is present at residues 56–72; it reads RSLRDKSSSLITESEER.

The protein belongs to the RxLR effector family.

It is found in the secreted. The protein localises to the host cell. Effector that is involved in host plant infection. Contributes to virulence during the early infection stage, by inhibiting plant defense responses induced by both PAMP-triggered immunity (PTI) and effector-triggered immunity (ETI). The sequence is that of RxLR effector protein CRE2 from Phytophthora infestans (strain T30-4) (Potato late blight agent).